Here is a 139-residue protein sequence, read N- to C-terminus: D-ribose pyranase (139 aa).

The active-site Proton donor is the His20. Residues Asp28, His106, and 128–130 (YAN) contribute to the substrate site.

The protein belongs to the RbsD / FucU family. RbsD subfamily. Homodecamer.

The protein localises to the cytoplasm. The catalysed reaction is beta-D-ribopyranose = beta-D-ribofuranose. Its pathway is carbohydrate metabolism; D-ribose degradation; D-ribose 5-phosphate from beta-D-ribopyranose: step 1/2. Functionally, catalyzes the interconversion of beta-pyran and beta-furan forms of D-ribose. The sequence is that of D-ribose pyranase from Vibrio parahaemolyticus serotype O3:K6 (strain RIMD 2210633).